Here is a 387-residue protein sequence, read N- to C-terminus: 1-deoxy-D-xylulose 5-phosphate reductoisomerase (387 aa).

NADPH is bound by residues threonine 10, glycine 11, serine 12, isoleucine 13, and asparagine 124. Lysine 125 contributes to the 1-deoxy-D-xylulose 5-phosphate binding site. An NADPH-binding site is contributed by glutamate 126. Mn(2+) is bound at residue aspartate 150. Residues serine 151, glutamate 152, serine 176, and histidine 199 each coordinate 1-deoxy-D-xylulose 5-phosphate. Glutamate 152 serves as a coordination point for Mn(2+). Position 205 (glycine 205) interacts with NADPH. Positions 212, 217, 218, and 221 each coordinate 1-deoxy-D-xylulose 5-phosphate. Mn(2+) is bound at residue glutamate 221.

It belongs to the DXR family. Mg(2+) is required as a cofactor. Requires Mn(2+) as cofactor.

It catalyses the reaction 2-C-methyl-D-erythritol 4-phosphate + NADP(+) = 1-deoxy-D-xylulose 5-phosphate + NADPH + H(+). It functions in the pathway isoprenoid biosynthesis; isopentenyl diphosphate biosynthesis via DXP pathway; isopentenyl diphosphate from 1-deoxy-D-xylulose 5-phosphate: step 1/6. Functionally, catalyzes the NADPH-dependent rearrangement and reduction of 1-deoxy-D-xylulose-5-phosphate (DXP) to 2-C-methyl-D-erythritol 4-phosphate (MEP). The chain is 1-deoxy-D-xylulose 5-phosphate reductoisomerase from Clostridium beijerinckii (strain ATCC 51743 / NCIMB 8052) (Clostridium acetobutylicum).